A 115-amino-acid chain; its full sequence is Mediator of RNA polymerase II transcription subunit 22 (115 aa).

Belongs to the Mediator complex subunit 22 family. As to quaternary structure, component of the Mediator complex.

It localises to the nucleus. Its function is as follows. Component of the Mediator complex, a coactivator involved in the regulated transcription of nearly all RNA polymerase II-dependent genes. Mediator functions as a bridge to convey information from gene-specific regulatory proteins to the basal RNA polymerase II transcription machinery. Mediator is recruited to promoters by direct interactions with regulatory proteins and serves as a scaffold for the assembly of a functional preinitiation complex with RNA polymerase II and the general transcription factors. The chain is Mediator of RNA polymerase II transcription subunit 22 (SRB6) from Candida albicans (strain SC5314 / ATCC MYA-2876) (Yeast).